Reading from the N-terminus, the 354-residue chain is 3-dehydroquinate synthase (354 aa).

NAD(+) is bound by residues 61–66 (DGESTK), 119–120 (TT), K132, K141, and 159–162 (FLET). Residues E174, H238, and H254 each coordinate Zn(2+).

It belongs to the sugar phosphate cyclases superfamily. Dehydroquinate synthase family. It depends on NAD(+) as a cofactor. Co(2+) is required as a cofactor. The cofactor is Zn(2+).

The protein resides in the cytoplasm. The enzyme catalyses 7-phospho-2-dehydro-3-deoxy-D-arabino-heptonate = 3-dehydroquinate + phosphate. Its pathway is metabolic intermediate biosynthesis; chorismate biosynthesis; chorismate from D-erythrose 4-phosphate and phosphoenolpyruvate: step 2/7. Functionally, catalyzes the conversion of 3-deoxy-D-arabino-heptulosonate 7-phosphate (DAHP) to dehydroquinate (DHQ). The polypeptide is 3-dehydroquinate synthase (Saccharolobus solfataricus (strain ATCC 35092 / DSM 1617 / JCM 11322 / P2) (Sulfolobus solfataricus)).